A 259-amino-acid chain; its full sequence is uncharacterized protein (259 aa).

A signal peptide spans 1 to 22; sequence MKHSKKLLLCISFLLITVFISG. The N-palmitoyl cysteine moiety is linked to residue cysteine 23. Cysteine 23 is lipidated: S-diacylglycerol cysteine.

This sequence belongs to the staphylococcal tandem lipoprotein family.

The protein localises to the cell membrane. This is an uncharacterized protein from Staphylococcus epidermidis (strain ATCC 35984 / DSM 28319 / BCRC 17069 / CCUG 31568 / BM 3577 / RP62A).